A 202-amino-acid chain; its full sequence is ATP-dependent Clp protease proteolytic subunit (202 aa).

Ser106 functions as the Nucleophile in the catalytic mechanism. Residue His131 is part of the active site.

It belongs to the peptidase S14 family. Fourteen ClpP subunits assemble into 2 heptameric rings which stack back to back to give a disk-like structure with a central cavity, resembling the structure of eukaryotic proteasomes.

Its subcellular location is the cytoplasm. The enzyme catalyses Hydrolysis of proteins to small peptides in the presence of ATP and magnesium. alpha-casein is the usual test substrate. In the absence of ATP, only oligopeptides shorter than five residues are hydrolyzed (such as succinyl-Leu-Tyr-|-NHMec, and Leu-Tyr-Leu-|-Tyr-Trp, in which cleavage of the -Tyr-|-Leu- and -Tyr-|-Trp bonds also occurs).. Its function is as follows. Cleaves peptides in various proteins in a process that requires ATP hydrolysis. Has a chymotrypsin-like activity. Plays a major role in the degradation of misfolded proteins. The polypeptide is ATP-dependent Clp protease proteolytic subunit (Shewanella oneidensis (strain ATCC 700550 / JCM 31522 / CIP 106686 / LMG 19005 / NCIMB 14063 / MR-1)).